Reading from the N-terminus, the 259-residue chain is Probable dihydroorotate dehydrogenase B (NAD(+)), electron transfer subunit (259 aa).

The region spanning 1-89 (MLPLNATIVQ…RGPFGKGFSL (89 aa)) is the FAD-binding FR-type domain. Positions 211, 216, 219, and 229 each coordinate [2Fe-2S] cluster.

The protein belongs to the PyrK family. As to quaternary structure, heterotetramer of 2 PyrK and 2 PyrD type B subunits. Requires [2Fe-2S] cluster as cofactor. It depends on FAD as a cofactor.

It participates in pyrimidine metabolism; UMP biosynthesis via de novo pathway; orotate from (S)-dihydroorotate (NAD(+) route): step 1/1. Its function is as follows. Responsible for channeling the electrons from the oxidation of dihydroorotate from the FMN redox center in the PyrD type B subunit to the ultimate electron acceptor NAD(+). This Methanosarcina barkeri (strain Fusaro / DSM 804) protein is Probable dihydroorotate dehydrogenase B (NAD(+)), electron transfer subunit.